Consider the following 389-residue polypeptide: Zip homologous protein 3 (389 aa).

The RING-type zinc finger occupies 6 to 43; sequence CNKCFNRKPPDGFFISSCFHIFCTKCAKADLAVCLICK. A coiled-coil region spans residues 123–164; it reads LAEATAWIQMAEKKLQASEEERVKAEREIEECQAKLKSMTNL. Residues 366–389 are disordered; the sequence is ISSQPGYLAQRKPINGRSFIGPAD.

As to quaternary structure, interacts with zhp-4; the interaction is required for their localization along paired chromosomes and stability, and for the formation of chiasma during meiotic recombination. In terms of tissue distribution, expressed througout the gonad (at protein level). Expressed in the germline.

It is found in the chromosome. Its function is as follows. Recruited co-dependently with zhp-4 to the synaptonemal complex between homologous chromosome pairs to regulate the formation and number of crossover events between homologs during meiotic recombination. In the early stages of pachytene, in complex with zhp-4, recruited by the zhp-1-zhp-2 heterodimer to designated crossover sites along the homolog pair to stabilize other pro-crossover factors such as rmh-1, msh-5 and cosa-1. This in turn facilitates crossover and promotes the formation of chiasma in each meiotic nucleus at the late pachytene stage of meiosis. Plays a role in the segregation of homologous chromosomes following the completion of crossovers. Together with him-14 and msh-5 plays a role in the activation of DNA damage-dependent apoptosis at the DNA damage checkpoint in pachytene cells. This is Zip homologous protein 3 from Caenorhabditis elegans.